We begin with the raw amino-acid sequence, 327 residues long: Ribosomal RNA small subunit methyltransferase H (327 aa).

S-adenosyl-L-methionine-binding positions include 36–38 (GGH), aspartate 55, leucine 89, aspartate 103, and glutamine 110. A disordered region spans residues 286–327 (GAEPASDTEIEQNARAGSVRLRAAERTAAEPGRAHNPTGGVR).

Belongs to the methyltransferase superfamily. RsmH family.

It is found in the cytoplasm. The enzyme catalyses cytidine(1402) in 16S rRNA + S-adenosyl-L-methionine = N(4)-methylcytidine(1402) in 16S rRNA + S-adenosyl-L-homocysteine + H(+). Its function is as follows. Specifically methylates the N4 position of cytidine in position 1402 (C1402) of 16S rRNA. The protein is Ribosomal RNA small subunit methyltransferase H of Parafrankia sp. (strain EAN1pec).